We begin with the raw amino-acid sequence, 210 residues long: Glutathione S-transferase 3 (210 aa).

Residues 1–80 (MDFYYLPLSA…YLVEKYGKQN (80 aa)) enclose the GST N-terminal domain. Residues S9, 50–52 (HTI), and 64–66 (ESR) contribute to the glutathione site. The 122-residue stretch at 87-208 (CPKKRALINQ…AGCLEMKKYF (122 aa)) folds into the GST C-terminal domain.

It belongs to the GST superfamily. Theta family. As to quaternary structure, homodimer.

It catalyses the reaction RX + glutathione = an S-substituted glutathione + a halide anion + H(+). In terms of biological role, conjugation of reduced glutathione to a wide number of exogenous and endogenous hydrophobic electrophiles. This is Glutathione S-transferase 3 (Gst3) from Musca domestica (House fly).